The following is a 153-amino-acid chain: HTH-type transcriptional regulator Zrp (153 aa).

The region spanning 2–63 is the HTH asnC-type domain; it reads IDYRDRHILS…LLDRKKINLP (62 aa). Residues 21-40 constitute a DNA-binding region (H-T-H motif); the sequence is LAEIAERVALSVSACSRRVA.

This is HTH-type transcriptional regulator Zrp (zrp) from Zymomonas mobilis subsp. mobilis (strain ATCC 10988 / DSM 424 / LMG 404 / NCIMB 8938 / NRRL B-806 / ZM1).